A 683-amino-acid chain; its full sequence is Elongation factor G-like protein (683 aa).

Residues 5–267 (QNVRSAALIG…YLGDIGVSPE (263 aa)) enclose the tr-type G domain. Residues 14–21 (GHNGSGKS), 73–77 (DTPGF), and 127–130 (NQMD) each bind GTP.

This sequence belongs to the TRAFAC class translation factor GTPase superfamily. Classic translation factor GTPase family. EF-G/EF-2 subfamily.

The protein is Elongation factor G-like protein of Thermotoga maritima (strain ATCC 43589 / DSM 3109 / JCM 10099 / NBRC 100826 / MSB8).